Reading from the N-terminus, the 768-residue chain is Probable LRR receptor-like serine/threonine-protein kinase At4g37250 (768 aa).

The first 21 residues, 1 to 21 (MRMELISVIFFFFCSVLSSSA), serve as a signal peptide directing secretion. Over 22–328 (LNSDGLVLMK…PNPRTGLRPG (307 aa)) the chain is Extracellular. The N-linked (GlcNAc...) asparagine glycan is linked to Asn-64. LRR repeat units follow at residues 67 to 90 (KVLTLSLPNSQLLGSIPSDLGSLL), 91 to 112 (TLQSLDLSNNSFNGPLPVSFFN), 115 to 137 (ELRFLDLSSNMISGEIPSAIGDL), 139 to 162 (NLLTLNLSDNALAGKLPTNLASLR), 163 to 183 (NLTVVSLENNYFSGEIPGGWR), 184 to 206 (VVEFLDLSSNLINGSLPPDFGGY), 207 to 229 (SLQYLNVSFNQISGEIPPEIGVN), and 232 to 254 (RNVTVDLSFNNLTGPIPDSPVFL). N-linked (GlcNAc...) asparagine glycosylation occurs at Asn-99. Residues Asn-144, Asn-163, Asn-196, Asn-212, Asn-233, and Asn-242 are each glycosylated (N-linked (GlcNAc...) asparagine). Residues 301 to 324 (PNTIGSNPVTDPNSQQTDPNPRTG) are disordered. A compositionally biased stretch (polar residues) spans 303–320 (TIGSNPVTDPNSQQTDPN). The chain crosses the membrane as a helical span at residues 329–349 (VIIGIVVGDIAGIGILAVIFL). At 350–768 (YIYRCKKNKI…IKSSSFHYGH (419 aa)) the chain is on the cytoplasmic side. The interval 361–432 (DNNNNDKQRT…NANQRSGDNK (72 aa)) is disordered. A compositionally biased stretch (low complexity) spans 378-387 (STFSSSSSSP). Acidic residues predominate over residues 407–420 (PSEEEDEDDEDEES). The region spanning 449 to 756 (KASAYILGAT…AVLERFHPNS (308 aa)) is the Protein kinase domain. Phosphoserine is present on residues Ser-451 and Ser-531. Residue Thr-553 is modified to Phosphothreonine. Ser-662 bears the Phosphoserine mark.

It belongs to the protein kinase superfamily. Ser/Thr protein kinase family.

The protein resides in the membrane. It carries out the reaction L-seryl-[protein] + ATP = O-phospho-L-seryl-[protein] + ADP + H(+). The enzyme catalyses L-threonyl-[protein] + ATP = O-phospho-L-threonyl-[protein] + ADP + H(+). The chain is Probable LRR receptor-like serine/threonine-protein kinase At4g37250 from Arabidopsis thaliana (Mouse-ear cress).